A 143-amino-acid chain; its full sequence is Nucleoside diphosphate kinase (143 aa).

Residues 1–132 (MVKPDGVQRG…LWFSPQELCQ (132 aa)) form the NDPK-like domain. Residues Lys-3, Phe-51, Arg-79, Thr-85, Arg-96, Val-103, and Asn-106 each contribute to the ADP site. ATP contacts are provided by Lys-3, Phe-51, Arg-79, Thr-85, and Arg-96. Residue Asn-106 coordinates ATP. The Pros-phosphohistidine intermediate role is filled by His-109.

Belongs to the NDK family. As to quaternary structure, homohexamer. It depends on Mg(2+) as a cofactor.

It catalyses the reaction a 2'-deoxyribonucleoside 5'-diphosphate + ATP = a 2'-deoxyribonucleoside 5'-triphosphate + ADP. The catalysed reaction is a ribonucleoside 5'-diphosphate + ATP = a ribonucleoside 5'-triphosphate + ADP. The enzyme catalyses GDP + ATP = GTP + ADP. It functions in the pathway purine metabolism; purine nucleotide biosynthesis. Functionally, major role in the synthesis of nucleoside triphosphates other than ATP. The ATP gamma phosphate is transferred to the NDP beta phosphate via a ping-pong mechanism, using a phosphorylated active-site intermediate. This is Nucleoside diphosphate kinase from Schistosoma mansoni (Blood fluke).